The sequence spans 388 residues: Large ribosomal subunit protein uL3B (388 aa).

Positions 1–10 (MSHCKFEQPR) are enriched in basic and acidic residues. The segment at 1–34 (MSHCKFEQPRHGSLGFLPRKRASRQRGKVKAFPK) is disordered. The segment covering 18-31 (PRKRASRQRGKVKA) has biased composition (basic residues).

Belongs to the universal ribosomal protein uL3 family. In terms of assembly, component of the large ribosomal subunit (LSU). Mature yeast ribosomes consist of a small (40S) and a large (60S) subunit. The 40S small subunit contains 1 molecule of ribosomal RNA (18S rRNA) and at least 33 different proteins. The large 60S subunit contains 3 rRNA molecules (25S, 5.8S and 5S rRNA) and at least 46 different proteins. uL3 forms together with ES39L one of the contact sites for the signal recognition particle that targets ribosomes to the endoplasmic reticulum membrane.

It is found in the cytoplasm. Component of the ribosome, a large ribonucleoprotein complex responsible for the synthesis of proteins in the cell. The small ribosomal subunit (SSU) binds messenger RNAs (mRNAs) and translates the encoded message by selecting cognate aminoacyl-transfer RNA (tRNA) molecules. The large subunit (LSU) contains the ribosomal catalytic site termed the peptidyl transferase center (PTC), which catalyzes the formation of peptide bonds, thereby polymerizing the amino acids delivered by tRNAs into a polypeptide chain. The nascent polypeptides leave the ribosome through a tunnel in the LSU and interact with protein factors that function in enzymatic processing, targeting, and the membrane insertion of nascent chains at the exit of the ribosomal tunnel. uL3 plays a role in coordinating processes of accommodating the aminoacyl-tRNA in the PTC. The chain is Large ribosomal subunit protein uL3B (rpl302) from Schizosaccharomyces pombe (strain 972 / ATCC 24843) (Fission yeast).